Reading from the N-terminus, the 289-residue chain is MSTHAETRAITAADIRAAKNTRRLAMLTAYDYPTASIADEGGMDMLLVGDSLAMVVLGHEDTLSVTLDEMIHHCRAVTRGASRALVVGDLPFMTYEQGPDQAMHSAARLFREGGVRAVKLEGGKEVAPQVEALVKAGIPVMGHIGLTPQRVAALGGFKVQGRSAAAARSLAEDARILEDAGCFALVLEAIPAPVAAHITRTSGIPTIGIGAGAQCDGQVLVVHDMLGLFDRFTPKFVKRYAELRGHAVKAVQQYGDEVRQGEFPAAQHSFGMPEDEQRRWEENVSGADD.

D50 and D89 together coordinate Mg(2+). Residues 50 to 51 (DS), D89, and K119 contribute to the 3-methyl-2-oxobutanoate site. Mg(2+) is bound at residue E121. E188 serves as the catalytic Proton acceptor. Residues 266–289 (AQHSFGMPEDEQRRWEENVSGADD) are disordered.

Belongs to the PanB family. Homodecamer; pentamer of dimers. The cofactor is Mg(2+).

The protein localises to the cytoplasm. The catalysed reaction is 3-methyl-2-oxobutanoate + (6R)-5,10-methylene-5,6,7,8-tetrahydrofolate + H2O = 2-dehydropantoate + (6S)-5,6,7,8-tetrahydrofolate. It participates in cofactor biosynthesis; (R)-pantothenate biosynthesis; (R)-pantoate from 3-methyl-2-oxobutanoate: step 1/2. Catalyzes the reversible reaction in which hydroxymethyl group from 5,10-methylenetetrahydrofolate is transferred onto alpha-ketoisovalerate to form ketopantoate. The protein is 3-methyl-2-oxobutanoate hydroxymethyltransferase of Oleidesulfovibrio alaskensis (strain ATCC BAA-1058 / DSM 17464 / G20) (Desulfovibrio alaskensis).